We begin with the raw amino-acid sequence, 310 residues long: Protein translocase subunit SecF (310 aa).

The next 6 helical transmembrane spans lie at 18–38 (FFTI…YRGG), 135–155 (QAVY…AFRF), 162–182 (IVSV…VILA), 188–208 (ITIV…TIVL), 240–260 (IVTS…GGEV), and 267–287 (IMII…APLI).

Belongs to the SecD/SecF family. SecF subfamily. Forms a complex with SecD. Part of the essential Sec protein translocation apparatus which comprises SecA, SecYEG and auxiliary proteins SecDF. Other proteins may also be involved.

It is found in the cell inner membrane. In terms of biological role, part of the Sec protein translocase complex. Interacts with the SecYEG preprotein conducting channel. SecDF uses the proton motive force (PMF) to complete protein translocation after the ATP-dependent function of SecA. The polypeptide is Protein translocase subunit SecF (Endomicrobium trichonymphae).